Reading from the N-terminus, the 546-residue chain is Probable ATP-dependent RNA helicase DDX56 (546 aa).

The Q motif signature appears at 7 to 35 (LGFEHMGLDHRLLQAVTDLGWSRPTLIQE). One can recognise a Helicase ATP-binding domain in the interval 38–218 (IPLALEGKDL…ELVLHNPVTL (181 aa)). Residue 51-58 (ARTGSGKT) coordinates ATP. Residue S126 is modified to Phosphoserine. Phosphothreonine is present on T141. A DEAD box motif is present at residues 166–169 (DEAD). The 195-residue stretch at 230–424 (QLQQFQVVCE…PYQFHMEEIE (195 aa)) folds into the Helicase C-terminal domain. Disordered regions lie at residues 323-342 (PVKG…SDPE) and 504-546 (LVHP…AAPS). A compositionally biased stretch (basic residues) spans 505–524 (VHPHKKRKKPLASKKAKKAK). S531 is subject to Phosphoserine.

The protein belongs to the DEAD box helicase family. DDX56/DBP9 subfamily. As to quaternary structure, may form homooligomeric complexes. Interacts with IRF3. Interacts with OCT4 and POU5F1.

It localises to the nucleus. Its subcellular location is the nucleolus. It carries out the reaction ATP + H2O = ADP + phosphate + H(+). Its function is as follows. Nucleolar RNA helicase that plays a role in various biological processes including innate immunity, ribosome biogenesis or nucleolus organization. Plays an essential role in maintaining nucleolar integrity in planarian stem cells. Maintains embryonic stem cells proliferation by conventional regulation of ribosome assembly and interaction with OCT4 and POU5F1 complex. Regulates antiviral innate immunity by inhibiting the virus-triggered signaling nuclear translocation of IRF3. Mechanistically, acts by disrupting the interaction between IRF3 and importin IPO5. May play a role in later stages of the processing of the pre-ribosomal particles leading to mature 60S ribosomal subunits. Has intrinsic ATPase activity. The sequence is that of Probable ATP-dependent RNA helicase DDX56 (DDX56) from Bos taurus (Bovine).